We begin with the raw amino-acid sequence, 316 residues long: Type II restriction enzyme BsuBI (316 aa).

Belongs to the BsuBI/PstI type II restriction endonuclease family. In terms of assembly, homodimer. The cofactor is Mg(2+).

The enzyme catalyses Endonucleolytic cleavage of DNA to give specific double-stranded fragments with terminal 5'-phosphates.. Functionally, a P subtype restriction enzyme that recognizes the double-stranded sequence 5'-CTGCAG-3' and cleaves after A-5. The sequence is that of Type II restriction enzyme BsuBI (hsdBR) from Bacillus subtilis.